The chain runs to 380 residues: Queuine tRNA-ribosyltransferase (380 aa).

Residue D96 is the Proton acceptor of the active site. Substrate is bound by residues 96–100 (DSGGF), D150, Q193, and G220. The interval 251–257 (GVGAPDS) is RNA binding. D270 (nucleophile) is an active-site residue. The RNA binding; important for wobble base 34 recognition stretch occupies residues 275-279 (TRIAR). The Zn(2+) site is built by C308, C310, C313, and H339.

Belongs to the queuine tRNA-ribosyltransferase family. As to quaternary structure, homodimer. Within each dimer, one monomer is responsible for RNA recognition and catalysis, while the other monomer binds to the replacement base PreQ1. Zn(2+) serves as cofactor.

The enzyme catalyses 7-aminomethyl-7-carbaguanine + guanosine(34) in tRNA = 7-aminomethyl-7-carbaguanosine(34) in tRNA + guanine. Its pathway is tRNA modification; tRNA-queuosine biosynthesis. In terms of biological role, catalyzes the base-exchange of a guanine (G) residue with the queuine precursor 7-aminomethyl-7-deazaguanine (PreQ1) at position 34 (anticodon wobble position) in tRNAs with GU(N) anticodons (tRNA-Asp, -Asn, -His and -Tyr). Catalysis occurs through a double-displacement mechanism. The nucleophile active site attacks the C1' of nucleotide 34 to detach the guanine base from the RNA, forming a covalent enzyme-RNA intermediate. The proton acceptor active site deprotonates the incoming PreQ1, allowing a nucleophilic attack on the C1' of the ribose to form the product. After dissociation, two additional enzymatic reactions on the tRNA convert PreQ1 to queuine (Q), resulting in the hypermodified nucleoside queuosine (7-(((4,5-cis-dihydroxy-2-cyclopenten-1-yl)amino)methyl)-7-deazaguanosine). This chain is Queuine tRNA-ribosyltransferase, found in Streptococcus pyogenes serotype M3 (strain ATCC BAA-595 / MGAS315).